An 87-amino-acid chain; its full sequence is Probable Fe(2+)-trafficking protein (87 aa).

It belongs to the Fe(2+)-trafficking protein family.

Could be a mediator in iron transactions between iron acquisition and iron-requiring processes, such as synthesis and/or repair of Fe-S clusters in biosynthetic enzymes. The sequence is that of Probable Fe(2+)-trafficking protein from Francisella tularensis subsp. mediasiatica (strain FSC147).